Reading from the N-terminus, the 312-residue chain is Thioredoxin reductase (312 aa).

33-43 (EGFFSGIAGGQ) is a binding site for FAD. A disulfide bond links Cys-138 and Cys-141. Residue 283-292 (DVQDKYYRQA) participates in FAD binding.

The protein belongs to the class-II pyridine nucleotide-disulfide oxidoreductase family. Homodimer. The cofactor is FAD.

It is found in the cytoplasm. It carries out the reaction [thioredoxin]-dithiol + NADP(+) = [thioredoxin]-disulfide + NADPH + H(+). The sequence is that of Thioredoxin reductase (trxB) from Chlamydia trachomatis serovar D (strain ATCC VR-885 / DSM 19411 / UW-3/Cx).